Reading from the N-terminus, the 406-residue chain is uncharacterized protein (406 aa).

A run of 10 helical transmembrane segments spans residues 7–27 (SILF…MVVI), 43–63 (VTLI…LITI), 69–89 (LTII…FYAL), 98–118 (LILV…FSPL), 155–175 (GLII…FLLF), 220–240 (IIIM…SVSL), 253–273 (WWGF…FIIY), 297–317 (LTLI…VLFM), 352–372 (VQFI…FLGV), and 374–394 (LVYV…FSQL).

The protein belongs to the major facilitator superfamily.

The protein resides in the cell membrane. This is an uncharacterized protein from Bacillus subtilis (strain 168).